We begin with the raw amino-acid sequence, 247 residues long: E3 SUMO-protein ligase NSE2 (247 aa).

Met-1 is subject to N-acetylmethionine. Glycyl lysine isopeptide (Lys-Gly) (interchain with G-Cter in SUMO2) cross-links involve residues Lys-90 and Lys-107. Ser-116 is modified (phosphoserine). Glycyl lysine isopeptide (Lys-Gly) (interchain with G-Cter in SUMO2) cross-links involve residues Lys-125 and Lys-130. An SP-RING-type zinc finger spans residues 154–240 (MDEDMIVTQS…LRRAIESHNK (87 aa)). The Zn(2+) site is built by Cys-185, His-187, Cys-210, and Cys-215.

Belongs to the NSE2 family. As to quaternary structure, component of the SMC5-SMC6 complex which consists at least of SMC5, SMC6, NSMCE2, NSMCE1, NSMCE4A or EID3 and NSMCE3. Post-translationally, sumoylated, possibly via autosumoylation.

The protein localises to the nucleus. Its subcellular location is the chromosome. It localises to the telomere. The protein resides in the PML body. It functions in the pathway protein modification; protein sumoylation. E3 SUMO-protein ligase component of the SMC5-SMC6 complex, a complex involved in DNA double-strand break repair by homologous recombination. Is not be required for the stability of the complex. The complex may promote sister chromatid homologous recombination by recruiting the SMC1-SMC3 cohesin complex to double-strand breaks. Acts as an E3 ligase mediating SUMO attachment to various proteins such as SMC6L1 and TSNAX, the shelterin complex subunits TERF1, TERF2, TINF2 and TERF2IP, RAD51AP1, and maybe the cohesin components RAD21 and STAG2. Required for recruitment of telomeres to PML nuclear bodies. Required for sister chromatid cohesion during prometaphase and mitotic progression. The sequence is that of E3 SUMO-protein ligase NSE2 (Nsmce2) from Rattus norvegicus (Rat).